Here is a 271-residue protein sequence, read N- to C-terminus: tRNA pseudouridine synthase A (271 aa).

D52 (nucleophile) is an active-site residue. Y110 is a substrate binding site.

It belongs to the tRNA pseudouridine synthase TruA family. As to quaternary structure, homodimer.

It catalyses the reaction uridine(38/39/40) in tRNA = pseudouridine(38/39/40) in tRNA. Its function is as follows. Formation of pseudouridine at positions 38, 39 and 40 in the anticodon stem and loop of transfer RNAs. The sequence is that of tRNA pseudouridine synthase A from Burkholderia mallei (strain NCTC 10247).